A 367-amino-acid chain; its full sequence is Alginate lyase (367 aa).

An N-terminal signal peptide occupies residues 1–27 (MKTSHLIRITLPGALAAALLASQVSQA). Substrate contacts are provided by residues 65–66 (SK), 138–139 (HT), and Y256.

It belongs to the polysaccharide lyase 5 family.

The protein resides in the periplasm. The enzyme catalyses Eliminative cleavage of alginate to give oligosaccharides with 4-deoxy-alpha-L-erythro-hex-4-enuronosyl groups at their non-reducing ends and beta-D-mannuronate at their reducing end.. Functionally, catalyzes the depolymerization of alginate by cleaving the beta-1,4 glycosidic bond between two adjacent sugar residues via a beta-elimination mechanism. May serve to degrade mislocalized alginate that is trapped in the periplasmic space. This chain is Alginate lyase, found in Pseudomonas paraeruginosa (strain DSM 24068 / PA7) (Pseudomonas aeruginosa (strain PA7)).